The following is a 110-amino-acid chain: MNYANFGLDFLNSVANAAVEGKKLDLASRGLQLRSRALDTERDFNYAKLAFERHKFDTNNDLRIYGDAMRIQALRAAGLRINPYSNGRQIYQDEADLANLHSYYSFYKTD.

Belongs to the vesivirus VP2 protein family. In terms of assembly, homooligomer. The portal-like structure consists in 12 copies of VP2. Interacts with capsid protein VP1.

The protein localises to the virion. It localises to the host cytoplasm. In terms of biological role, minor structural protein that forms a portal-like structure at a unique three-fold axis of symmetry, following binding to the host receptor. The channel formed by VP2 may allow the delivery of the viral genome through the host endosomal membrane. In Vesicular exanthema of swine virus serotype A48 (isolate Swine/United States/A48/1948) (VESV), this protein is Minor capsid protein VP2.